The sequence spans 858 residues: Neural cell adhesion molecule 1 (858 aa).

The first 19 residues, 1–19, serve as a signal peptide directing secretion; the sequence is MLRTKDLIWTLFFLGTAVS. 5 consecutive Ig-like C2-type domains span residues 20–111, 116–205, 212–302, 309–414, and 417–502; these read LQVD…ATVN, QKLM…KDIQ, PTVQ…ASIH, PKIT…LEVQ, and PKLQ…ESLE. At 20–721 the chain is on the extracellular side; it reads LQVDIVPSQG…NGSPTAGLST (702 aa). Disulfide bonds link Cys41–Cys96 and Cys139–Cys189. Heparin-binding positions include 152–156 and 161–165; these read KHKGR and KKDVR. N-linked (GlcNAc...) asparagine glycosylation occurs at Asn222. A disulfide bridge links Cys235 with Cys288. N-linked (GlcNAc...) asparagine glycans are attached at residues Asn316, Asn348, Asn434, Asn460, and Asn489. A disulfide bridge links Cys330 with Cys396. Cys437 and Cys490 form a disulfide bridge. Fibronectin type-III domains are found at residues 510-609 and 611-706; these read TPSS…TQPV and EPSA…SAQP. The helical transmembrane segment at 722–739 threads the bilayer; that stretch reads GAIVGILIVIFVLLLVVM. The Cytoplasmic segment spans residues 740-858; sequence DITCYFLNKC…TQTKENESKA (119 aa). Positions 765 to 858 are disordered; the sequence is PGAKGKDMEE…TQTKENESKA (94 aa). Composition is skewed to basic and acidic residues over residues 768-809 and 817-834; these read KGKD…HTEP and EPEKGPVETKSEPQESEA. Residues Ser780 and Ser784 each carry the phosphoserine modification.

Interacts with MDK. Found in a complex with SLC39A6, SLC39A10 and with NCAM1; this complex controls NCAM1 phosphorylation and integration into focal adhesion complexes during epithelial-tomesenchymal transition. Interacts with synaptic plasticity regulator PANTS. Post-translationally, polysialylated by ST8SIA2 and ST8SIA4. Polysialylation modulates cell interactions by confering both attractive and repulsive properties that are highly regulated by ST8SIA2 and ST8SIA4. Polysialylation is formed on a-2,3-linked sialic acid of core glycans.

The protein resides in the cell membrane. Functionally, this protein is a cell adhesion molecule involved in neuron-neuron adhesion, neurite fasciculation, outgrowth of neurites, etc. The polypeptide is Neural cell adhesion molecule 1 (Rattus norvegicus (Rat)).